The chain runs to 312 residues: tRNA dimethylallyltransferase (312 aa).

An ATP-binding site is contributed by 12-19 (GPTAIGKS). 14–19 (TAIGKS) serves as a coordination point for substrate. Interaction with substrate tRNA regions lie at residues 38-41 (DSKL) and 162-166 (QRVLR).

Belongs to the IPP transferase family. In terms of assembly, monomer. Requires Mg(2+) as cofactor.

It catalyses the reaction adenosine(37) in tRNA + dimethylallyl diphosphate = N(6)-dimethylallyladenosine(37) in tRNA + diphosphate. Functionally, catalyzes the transfer of a dimethylallyl group onto the adenine at position 37 in tRNAs that read codons beginning with uridine, leading to the formation of N6-(dimethylallyl)adenosine (i(6)A). The polypeptide is tRNA dimethylallyltransferase (Buchnera aphidicola subsp. Cinara cedri (strain Cc)).